The primary structure comprises 428 residues: Light-independent protochlorophyllide reductase subunit N (428 aa).

Residues C29, C54, and C115 each contribute to the [4Fe-4S] cluster site.

It belongs to the BchN/ChlN family. In terms of assembly, protochlorophyllide reductase is composed of three subunits; BchL, BchN and BchB. Forms a heterotetramer of two BchB and two BchN subunits. It depends on [4Fe-4S] cluster as a cofactor.

It carries out the reaction chlorophyllide a + oxidized 2[4Fe-4S]-[ferredoxin] + 2 ADP + 2 phosphate = protochlorophyllide a + reduced 2[4Fe-4S]-[ferredoxin] + 2 ATP + 2 H2O. The protein operates within porphyrin-containing compound metabolism; bacteriochlorophyll biosynthesis (light-independent). Functionally, component of the dark-operative protochlorophyllide reductase (DPOR) that uses Mg-ATP and reduced ferredoxin to reduce ring D of protochlorophyllide (Pchlide) to form chlorophyllide a (Chlide). This reaction is light-independent. The NB-protein (BchN-BchB) is the catalytic component of the complex. In Cereibacter sphaeroides (strain KD131 / KCTC 12085) (Rhodobacter sphaeroides), this protein is Light-independent protochlorophyllide reductase subunit N.